The sequence spans 508 residues: NAD(P)H-quinone oxidoreductase subunit 2 B, chloroplastic (508 aa).

The next 13 helical transmembrane spans lie at 24–44 (LLLFDGSLIFPECILIFGLIL), 59–79 (WLYFISSTSLVMSITALLFRW), 99–119 (IFQFLILLCSTLCIPLSVEYI), 124–144 (MAITEFLLFVLTATLGGMFLC), 149–169 (FITIFVAPECFSLCSYLLSGY), 184–204 (LLMGGASSSILVHGFSWLYGL), 227–247 (PGISIALIFITVGIGFKLSPA), 295–315 (WHLLLEILAILSMILGNLIAI), 323–343 (MLAYSSIGQIGYVIIGIIVGD), 354–374 (YMLFYISMNLGAFACIVLFGL), 395–415 (ALSLALCLLSLGGLPPLAGFF), 418–438 (LYLFWCGWQAGLYFLVFIGLL), and 482–502 (MIVCVIASTIPGISMNPIIAI).

Belongs to the complex I subunit 2 family. NDH is composed of at least 16 different subunits, 5 of which are encoded in the nucleus.

The protein localises to the plastid. It localises to the chloroplast thylakoid membrane. The enzyme catalyses a plastoquinone + NADH + (n+1) H(+)(in) = a plastoquinol + NAD(+) + n H(+)(out). It carries out the reaction a plastoquinone + NADPH + (n+1) H(+)(in) = a plastoquinol + NADP(+) + n H(+)(out). Its function is as follows. NDH shuttles electrons from NAD(P)H:plastoquinone, via FMN and iron-sulfur (Fe-S) centers, to quinones in the photosynthetic chain and possibly in a chloroplast respiratory chain. The immediate electron acceptor for the enzyme in this species is believed to be plastoquinone. Couples the redox reaction to proton translocation, and thus conserves the redox energy in a proton gradient. This is NAD(P)H-quinone oxidoreductase subunit 2 B, chloroplastic from Ipomoea purpurea (Common morning glory).